Here is a 392-residue protein sequence, read N- to C-terminus: DNA replication and repair protein RecF (392 aa).

30 to 37 (GPNAAGKT) serves as a coordination point for ATP.

Belongs to the RecF family.

The protein resides in the cytoplasm. Its function is as follows. The RecF protein is involved in DNA metabolism; it is required for DNA replication and normal SOS inducibility. RecF binds preferentially to single-stranded, linear DNA. It also seems to bind ATP. The sequence is that of DNA replication and repair protein RecF from Chloroflexus aurantiacus (strain ATCC 29364 / DSM 637 / Y-400-fl).